The following is a 236-amino-acid chain: UPF0173 metal-dependent hydrolase DSY1309 (236 aa).

It belongs to the UPF0173 family.

The polypeptide is UPF0173 metal-dependent hydrolase DSY1309 (Desulfitobacterium hafniense (strain Y51)).